The sequence spans 201 residues: uncharacterized protein (201 aa).

Positions 121–141 are disordered; that stretch reads HHRTRPGRGPGPRPGGSAMAG.

This is an uncharacterized protein from Mycobacterium tuberculosis (strain ATCC 25618 / H37Rv).